Here is a 79-residue protein sequence, read N- to C-terminus: Small ribosomal subunit protein bS18 (79 aa).

Belongs to the bacterial ribosomal protein bS18 family. In terms of assembly, part of the 30S ribosomal subunit. Forms a tight heterodimer with protein bS6.

In terms of biological role, binds as a heterodimer with protein bS6 to the central domain of the 16S rRNA, where it helps stabilize the platform of the 30S subunit. The sequence is that of Small ribosomal subunit protein bS18 from Bacillus pumilus (strain SAFR-032).